The primary structure comprises 168 residues: S-ribosylhomocysteine lyase (168 aa).

His54, His58, and Cys128 together coordinate Fe cation.

It belongs to the LuxS family. Homodimer. The cofactor is Fe cation.

It carries out the reaction S-(5-deoxy-D-ribos-5-yl)-L-homocysteine = (S)-4,5-dihydroxypentane-2,3-dione + L-homocysteine. In terms of biological role, involved in the synthesis of autoinducer 2 (AI-2) which is secreted by bacteria and is used to communicate both the cell density and the metabolic potential of the environment. The regulation of gene expression in response to changes in cell density is called quorum sensing. Catalyzes the transformation of S-ribosylhomocysteine (RHC) to homocysteine (HC) and 4,5-dihydroxy-2,3-pentadione (DPD). The polypeptide is S-ribosylhomocysteine lyase (Mannheimia succiniciproducens (strain KCTC 0769BP / MBEL55E)).